The following is a 253-amino-acid chain: Probable transcriptional regulatory protein Synpcc7942_1017 (253 aa).

The protein belongs to the TACO1 family.

The protein localises to the cytoplasm. The chain is Probable transcriptional regulatory protein Synpcc7942_1017 from Synechococcus elongatus (strain ATCC 33912 / PCC 7942 / FACHB-805) (Anacystis nidulans R2).